Reading from the N-terminus, the 235-residue chain is Vacuolar protein sorting-associated protein 60.2 (235 aa).

The segment at 1–30 (MKRIFGAKNNKEPPPSIQDASDRINKRGDS) is disordered. Residues 20 to 30 (ASDRINKRGDS) are compositionally biased toward basic and acidic residues. The stretch at 99–148 (LKDAQQTMTALKSANKELKGMMKTVKIQDIDNLQDDMMDLMDESSEIQET) forms a coiled coil. A disordered region spans residues 174 to 235 (DMGNETEADG…PAVPRASLRG (62 aa)).

Belongs to the SNF7 family.

It is found in the endosome. The protein resides in the multivesicular body membrane. In terms of biological role, probable peripherally associated component of the endosomal sorting required for transport complex III (ESCRT-III) which is involved in multivesicular bodies (MVBs) formation and sorting of endosomal cargo proteins into MVBs. This chain is Vacuolar protein sorting-associated protein 60.2, found in Arabidopsis thaliana (Mouse-ear cress).